The chain runs to 464 residues: Probable 3-ketoacyl-CoA synthase 21 (464 aa).

A helical membrane pass occupies residues 21-41; the sequence is LLSSGVSVFEIFAGLLVVHLI. The region spanning 42 to 333 is the FAE domain; the sequence is YQRIRTRVKV…VIQHILCKKL (292 aa). Residues Cys187, His352, His356, His385, and Asn389 contribute to the active site.

It belongs to the thiolase-like superfamily. Chalcone/stilbene synthases family. As to expression, expressed in flowers.

The protein resides in the membrane. It catalyses the reaction a very-long-chain acyl-CoA + malonyl-CoA + H(+) = a very-long-chain 3-oxoacyl-CoA + CO2 + CoA. It functions in the pathway lipid metabolism; fatty acid biosynthesis. The chain is Probable 3-ketoacyl-CoA synthase 21 from Arabidopsis thaliana (Mouse-ear cress).